The sequence spans 118 residues: Putative pterin-4-alpha-carbinolamine dehydratase (118 aa).

The protein belongs to the pterin-4-alpha-carbinolamine dehydratase family.

The enzyme catalyses (4aS,6R)-4a-hydroxy-L-erythro-5,6,7,8-tetrahydrobiopterin = (6R)-L-erythro-6,7-dihydrobiopterin + H2O. The sequence is that of Putative pterin-4-alpha-carbinolamine dehydratase from Pseudomonas savastanoi pv. phaseolicola (strain 1448A / Race 6) (Pseudomonas syringae pv. phaseolicola (strain 1448A / Race 6)).